A 111-amino-acid polypeptide reads, in one-letter code: UPF0060 membrane protein HCH_03337 (111 aa).

Transmembrane regions (helical) follow at residues 8–28 (LLFA…WLVI), 33–53 (SLWL…LLTL), 65–85 (YGGM…GVGL), and 88–108 (FDFL…LQPI).

It belongs to the UPF0060 family.

It is found in the cell inner membrane. The polypeptide is UPF0060 membrane protein HCH_03337 (Hahella chejuensis (strain KCTC 2396)).